The primary structure comprises 308 residues: Phenylcoumaran benzylic ether reductase PT1 (308 aa).

Residues 11-17 (GATGYIG), arginine 36, and lysine 46 each bind NADP(+). Residue lysine 134 is the Proton acceptor of the active site. Arginine 138 serves as a coordination point for NADP(+).

The protein belongs to the NmrA-type oxidoreductase family. Isoflavone reductase subfamily.

The enzyme catalyses (-)-dehydrodiconiferyl alcohol + NADPH + H(+) = (S)-isodihydrodehydrodiconiferyl alcohol + NADP(+). The catalysed reaction is (+)-dehydrodiconiferyl alcohol + NADPH + H(+) = (R)-isodihydrodehydrodiconiferyl alcohol + NADP(+). It carries out the reaction (2R,3S)-dihydrodehydrodiconiferyl alcohol + NADPH + H(+) = (S)-tetrahydrodehydrodiconiferyl alcohol + NADP(+). It catalyses the reaction (2S,3R)-dihydrodehydrodiconiferyl alcohol + NADPH + H(+) = (R)-tetrahydrodehydrodiconiferyl alcohol + NADP(+). Functionally, oxidoreductase involved in lignan biosynthesis. Catalyzes the NADPH-dependent reduction of phenylcoumaran benzylic ethers. Converts dehydrodiconiferyl alcohol (DDC) to isodihydrodehydrodiconiferyl alcohol (IDDDC), and dihydrodehydrodiconiferyl alcohol (DDDC) to tetrahydrodehydrodiconiferyl alcohol (TDDC). In Pinus taeda (Loblolly pine), this protein is Phenylcoumaran benzylic ether reductase PT1.